A 287-amino-acid polypeptide reads, in one-letter code: NAD kinase (287 aa).

The Proton acceptor role is filled by aspartate 66. Residues 66–67 (DG), 137–138 (ND), arginine 148, arginine 165, aspartate 167, and 178–183 (TAYSMS) each bind NAD(+).

Belongs to the NAD kinase family. It depends on a divalent metal cation as a cofactor.

The protein resides in the cytoplasm. It catalyses the reaction NAD(+) + ATP = ADP + NADP(+) + H(+). Functionally, involved in the regulation of the intracellular balance of NAD and NADP, and is a key enzyme in the biosynthesis of NADP. Catalyzes specifically the phosphorylation on 2'-hydroxyl of the adenosine moiety of NAD to yield NADP. The sequence is that of NAD kinase from Chlorobium limicola (strain DSM 245 / NBRC 103803 / 6330).